A 666-amino-acid chain; its full sequence is tRNA 5-methylaminomethyl-2-thiouridine biosynthesis bifunctional protein MnmC (666 aa).

The tract at residues 1-245 is tRNA (mnm(5)s(2)U34)-methyltransferase; sequence MKQYAIQPAT…KREMLCGVME (245 aa). Positions 270–666 are FAD-dependent cmnm(5)s(2)U34 oxidoreductase; the sequence is IGGGIASALL…RKLLKGKAVK (397 aa).

In the N-terminal section; belongs to the methyltransferase superfamily. tRNA (mnm(5)s(2)U34)-methyltransferase family. It in the C-terminal section; belongs to the DAO family. It depends on FAD as a cofactor.

The protein resides in the cytoplasm. The catalysed reaction is 5-aminomethyl-2-thiouridine(34) in tRNA + S-adenosyl-L-methionine = 5-methylaminomethyl-2-thiouridine(34) in tRNA + S-adenosyl-L-homocysteine + H(+). In terms of biological role, catalyzes the last two steps in the biosynthesis of 5-methylaminomethyl-2-thiouridine (mnm(5)s(2)U) at the wobble position (U34) in tRNA. Catalyzes the FAD-dependent demodification of cmnm(5)s(2)U34 to nm(5)s(2)U34, followed by the transfer of a methyl group from S-adenosyl-L-methionine to nm(5)s(2)U34, to form mnm(5)s(2)U34. The chain is tRNA 5-methylaminomethyl-2-thiouridine biosynthesis bifunctional protein MnmC from Salmonella typhi.